The primary structure comprises 224 residues: Deoxyguanosine kinase (224 aa).

8–16 (GPIGAGKSS) provides a ligand contact to ATP. Residues E32, Y44, and Q55 each contribute to the substrate site. D78 functions as the Proton acceptor in the catalytic mechanism. The substrate site is built by R79, D84, and E149.

It belongs to the DCK/DGK family. In terms of assembly, heterodimer of a deoxyadenosine (DAK) and a deoxyguanosine kinase (DGK).

The enzyme catalyses 2'-deoxyguanosine + ATP = dGMP + ADP + H(+). DGK/DAK plays an essential role in generating the deoxyribonucleotide precursors, dGTP and dATP, for DNA metabolism. In Lactobacillus johnsonii (strain CNCM I-12250 / La1 / NCC 533), this protein is Deoxyguanosine kinase.